The chain runs to 109 residues: Parvalbumin-7 (109 aa).

Alanine 2 carries the post-translational modification N-acetylalanine. 2 EF-hand domains span residues 39–74 (LSAD…FSAD) and 78–109 (LTDK…LVHE). Ca(2+) contacts are provided by aspartate 52, aspartate 54, serine 56, phenylalanine 58, glutamate 60, glutamate 63, aspartate 91, aspartate 93, aspartate 95, lysine 97, and glutamate 102.

Belongs to the parvalbumin family.

Its function is as follows. In muscle, parvalbumin is thought to be involved in relaxation after contraction. It binds two calcium ions. This Danio rerio (Zebrafish) protein is Parvalbumin-7 (pvalb7).